The chain runs to 223 residues: uncharacterized protein (223 aa).

The protein to M.jannaschii MJ0575.

This is an uncharacterized protein from Methanocaldococcus jannaschii (strain ATCC 43067 / DSM 2661 / JAL-1 / JCM 10045 / NBRC 100440) (Methanococcus jannaschii).